A 143-amino-acid chain; its full sequence is Snake venom vascular endothelial growth factor toxin (143 aa).

A signal peptide spans 1-24 (MAVYLLAVAILFCIQGWPSGTVQG). Position 25 is a pyrrolidone carboxylic acid (Glu) (E25). Cystine bridges form between C38/C80, C69/C115, and C73/C117. The disordered stretch occupies residues 117–143 (CRPRSPGDVNDGRNPKEGEPRARFPFV).

The protein belongs to the PDGF/VEGF growth factor family. Snake venom VEGF subfamily. Homodimer; disulfide-linked. Interacts with VEGF receptor-1 (FLT1) with a high affinity, whereas it binds to VEGF receptor-2 (KDR) with a low affinity. Does not bind to VEGFR-3/FLT4 and neuropilin-1 (NRP1). As to expression, expressed by the venom gland.

It localises to the secreted. In terms of biological role, snake venom VEGFs may contribute to venom dispersion and prey subjugation by inducing vascular permeability and hypotension. This protein activates the vascular endothelial growth factor receptor-1 (VEGFR-1/FLT1), and consequently promotes the proliferation and tissue factor production of endothelial cells, the neovascularization in the chicken chorioallantoic membrane, and increases vascular permeability. Also stimulates tissue-factor production and human monocyte chemotaxis. This Protobothrops mucrosquamatus (Taiwan habu) protein is Snake venom vascular endothelial growth factor toxin.